The sequence spans 267 residues: DNA repair protein RecO (267 aa).

It belongs to the RecO family.

In terms of biological role, involved in DNA repair and RecF pathway recombination. The polypeptide is DNA repair protein RecO (Prochlorococcus marinus (strain MIT 9313)).